Reading from the N-terminus, the 180-residue chain is Large ribosomal subunit protein eL18 (180 aa).

The disordered stretch occupies residues Phe-152–Ala-180. Basic and acidic residues predominate over residues Lys-170 to Ala-180.

Belongs to the eukaryotic ribosomal protein eL18 family.

It is found in the cytoplasm. This chain is Large ribosomal subunit protein eL18 (RPL18), found in Taenia asiatica (Asian tapeworm).